A 697-amino-acid chain; its full sequence is Elongation factor G (697 aa).

A tr-type G domain is found at 10–290; the sequence is THFRNIGIAA…AVVDYLPSPL (281 aa). GTP-binding positions include 19–26, 89–93, and 143–146; these read AHIDAGKT, DTPGH, and NKMD.

It belongs to the TRAFAC class translation factor GTPase superfamily. Classic translation factor GTPase family. EF-G/EF-2 subfamily.

It localises to the cytoplasm. Catalyzes the GTP-dependent ribosomal translocation step during translation elongation. During this step, the ribosome changes from the pre-translocational (PRE) to the post-translocational (POST) state as the newly formed A-site-bound peptidyl-tRNA and P-site-bound deacylated tRNA move to the P and E sites, respectively. Catalyzes the coordinated movement of the two tRNA molecules, the mRNA and conformational changes in the ribosome. The chain is Elongation factor G from Deinococcus deserti (strain DSM 17065 / CIP 109153 / LMG 22923 / VCD115).